A 247-amino-acid polypeptide reads, in one-letter code: tRNA pseudouridine synthase A (247 aa).

D52 functions as the Nucleophile in the catalytic mechanism. Y113 contributes to the substrate binding site.

This sequence belongs to the tRNA pseudouridine synthase TruA family. In terms of assembly, homodimer.

It carries out the reaction uridine(38/39/40) in tRNA = pseudouridine(38/39/40) in tRNA. Its function is as follows. Formation of pseudouridine at positions 38, 39 and 40 in the anticodon stem and loop of transfer RNAs. In Rhizobium meliloti (strain 1021) (Ensifer meliloti), this protein is tRNA pseudouridine synthase A.